Consider the following 414-residue polypeptide: Histidine--tRNA ligase (414 aa).

The protein belongs to the class-II aminoacyl-tRNA synthetase family. As to quaternary structure, homodimer.

The protein localises to the cytoplasm. It carries out the reaction tRNA(His) + L-histidine + ATP = L-histidyl-tRNA(His) + AMP + diphosphate + H(+). In Rickettsia conorii (strain ATCC VR-613 / Malish 7), this protein is Histidine--tRNA ligase.